The following is a 284-amino-acid chain: Polyamine aminopropyltransferase (284 aa).

Positions 2–237 (ELWYTEKHTE…GHWLFGFASK (236 aa)) constitute a PABS domain. S-methyl-5'-thioadenosine is bound at residue Gln-31. Residues His-62 and Asp-86 each coordinate spermidine. Residues Glu-106 and 137-138 (DG) each bind S-methyl-5'-thioadenosine. Asp-155 (proton acceptor) is an active-site residue. Residue 155–158 (DSTD) coordinates spermidine. S-methyl-5'-thioadenosine is bound at residue Pro-162.

It belongs to the spermidine/spermine synthase family. Homodimer or homotetramer.

It localises to the cytoplasm. It catalyses the reaction S-adenosyl 3-(methylsulfanyl)propylamine + putrescine = S-methyl-5'-thioadenosine + spermidine + H(+). Its pathway is amine and polyamine biosynthesis; spermidine biosynthesis; spermidine from putrescine: step 1/1. Functionally, catalyzes the irreversible transfer of a propylamine group from the amino donor S-adenosylmethioninamine (decarboxy-AdoMet) to putrescine (1,4-diaminobutane) to yield spermidine. This Clostridium botulinum (strain Eklund 17B / Type B) protein is Polyamine aminopropyltransferase.